A 227-amino-acid polypeptide reads, in one-letter code: Ribose-5-phosphate isomerase A (227 aa).

Substrate contacts are provided by residues 26 to 29 (TGST), 82 to 85 (DGAD), and 95 to 98 (KGGG). Glu-104 functions as the Proton acceptor in the catalytic mechanism. Residue Lys-122 coordinates substrate.

The protein belongs to the ribose 5-phosphate isomerase family. Homodimer.

The enzyme catalyses aldehydo-D-ribose 5-phosphate = D-ribulose 5-phosphate. Its pathway is carbohydrate degradation; pentose phosphate pathway; D-ribose 5-phosphate from D-ribulose 5-phosphate (non-oxidative stage): step 1/1. In terms of biological role, catalyzes the reversible conversion of ribose-5-phosphate to ribulose 5-phosphate. This is Ribose-5-phosphate isomerase A from Streptococcus pneumoniae serotype 4 (strain ATCC BAA-334 / TIGR4).